A 187-amino-acid polypeptide reads, in one-letter code: Early nodulin-55-2 (187 aa).

The signal sequence occupies residues 1 to 26 (MASCLPNASPFLVMLAMCLLISTSEA). In terms of domain architecture, Phytocyanin spans 27–132 (EKYVVGGSEK…GLKLAVLVIS (106 aa)). Asn78, Asn116, and Asn134 each carry an N-linked (GlcNAc...) asparagine glycan. Cys85 and Cys120 are disulfide-bonded. The disordered stretch occupies residues 138 to 167 (KNLLSPSPSPSPPPSSLLSPSPSPLPNNQG). Residues 144-162 (SPSPSPPPSSLLSPSPSPL) are compositionally biased toward pro residues.

Belongs to the early nodulin-like (ENODL) family.

The protein resides in the symbiosome. It is found in the peribacteroid membrane. Functionally, may act as a carbohydrate transporter. In Glycine max (Soybean), this protein is Early nodulin-55-2.